The sequence spans 155 residues: Ribosomal RNA large subunit methyltransferase H (155 aa).

Residues L72, G103, and 122-127 (LSPLTF) contribute to the S-adenosyl-L-methionine site.

This sequence belongs to the RNA methyltransferase RlmH family. Homodimer.

The protein localises to the cytoplasm. The enzyme catalyses pseudouridine(1915) in 23S rRNA + S-adenosyl-L-methionine = N(3)-methylpseudouridine(1915) in 23S rRNA + S-adenosyl-L-homocysteine + H(+). Its function is as follows. Specifically methylates the pseudouridine at position 1915 (m3Psi1915) in 23S rRNA. The chain is Ribosomal RNA large subunit methyltransferase H from Alkalilimnicola ehrlichii (strain ATCC BAA-1101 / DSM 17681 / MLHE-1).